The primary structure comprises 537 residues: Carbamoyl phosphate synthase large chain, C-terminal section (537 aa).

The segment at 1–395 (MSKKVVILGS…AYYKAQLSAG (395 aa)) is carbamoyl phosphate synthetic domain. An ATP-grasp domain is found at 122–313 (RELIIELGLK…LAKIATKVAI (192 aa)). R158, K197, L199, E204, G229, V230, H231, S232, Q272, and E284 together coordinate ATP. Residues Q272, E284, and N286 each contribute to the Mg(2+) site. The Mn(2+) site is built by Q272, E284, and N286. An MGS-like domain is found at 396–537 (YRLPEKGNLF…VHSLQEIYNI (142 aa)). Residues 396-537 (YRLPEKGNLF…VHSLQEIYNI (142 aa)) are allosteric domain.

This sequence belongs to the CarB family. As to quaternary structure, composed of two chains; the small (or glutamine) chain promotes the hydrolysis of glutamine to ammonia, which is used by the large (or ammonia) chain to synthesize carbamoyl phosphate. Tetramer of heterodimers (alpha,beta)4. Mg(2+) is required as a cofactor. It depends on Mn(2+) as a cofactor.

The catalysed reaction is hydrogencarbonate + L-glutamine + 2 ATP + H2O = carbamoyl phosphate + L-glutamate + 2 ADP + phosphate + 2 H(+). It carries out the reaction hydrogencarbonate + NH4(+) + 2 ATP = carbamoyl phosphate + 2 ADP + phosphate + 2 H(+). It participates in amino-acid biosynthesis; L-arginine biosynthesis; carbamoyl phosphate from bicarbonate: step 1/1. It functions in the pathway pyrimidine metabolism; UMP biosynthesis via de novo pathway; (S)-dihydroorotate from bicarbonate: step 1/3. Its function is as follows. Large subunit of the glutamine-dependent carbamoyl phosphate synthetase (CPSase). CPSase catalyzes the formation of carbamoyl phosphate from the ammonia moiety of glutamine, carbonate, and phosphate donated by ATP, constituting the first step of 2 biosynthetic pathways, one leading to arginine and/or urea and the other to pyrimidine nucleotides. The large subunit (synthetase) binds the substrates ammonia (free or transferred from glutamine from the small subunit), hydrogencarbonate and ATP and carries out an ATP-coupled ligase reaction, activating hydrogencarbonate by forming carboxy phosphate which reacts with ammonia to form carbamoyl phosphate. This chain is Carbamoyl phosphate synthase large chain, C-terminal section (carB2), found in Aquifex aeolicus (strain VF5).